Reading from the N-terminus, the 228-residue chain is Phosphatidate cytidylyltransferase (228 aa).

A run of 6 helical transmembrane segments spans residues 31–51, 65–85, 93–113, 131–151, 165–185, and 206–226; these read FVVA…LVGL, IHYL…LIFL, LVIM…MIGG, WTGL…VSLI, IYLF…DLFI, and GVLD…GINI.

The protein belongs to the CDS family.

Its subcellular location is the cell membrane. The enzyme catalyses a 1,2-diacyl-sn-glycero-3-phosphate + CTP + H(+) = a CDP-1,2-diacyl-sn-glycerol + diphosphate. It participates in phospholipid metabolism; CDP-diacylglycerol biosynthesis; CDP-diacylglycerol from sn-glycerol 3-phosphate: step 3/3. The chain is Phosphatidate cytidylyltransferase (cdsA) from Rickettsia typhi (strain ATCC VR-144 / Wilmington).